The primary structure comprises 488 residues: Ribulose bisphosphate carboxylase large chain (488 aa).

Positions 127 and 177 each coordinate substrate. K179 acts as the Proton acceptor in catalysis. K181 lines the substrate pocket. The Mg(2+) site is built by K205, D207, and E208. The residue at position 205 (K205) is an N6-carboxylysine. The active-site Proton acceptor is the H297. Substrate-binding residues include R298, H330, and S382.

It belongs to the RuBisCO large chain family. Type I subfamily. Heterohexadecamer of 8 large chains and 8 small chains. It depends on Mg(2+) as a cofactor.

Its subcellular location is the plastid. It localises to the chloroplast. The catalysed reaction is 2 (2R)-3-phosphoglycerate + 2 H(+) = D-ribulose 1,5-bisphosphate + CO2 + H2O. The enzyme catalyses D-ribulose 1,5-bisphosphate + O2 = 2-phosphoglycolate + (2R)-3-phosphoglycerate + 2 H(+). Its function is as follows. RuBisCO catalyzes two reactions: the carboxylation of D-ribulose 1,5-bisphosphate, the primary event in carbon dioxide fixation, as well as the oxidative fragmentation of the pentose substrate in the photorespiration process. Both reactions occur simultaneously and in competition at the same active site. The polypeptide is Ribulose bisphosphate carboxylase large chain (Ectocarpus siliculosus (Brown alga)).